The sequence spans 1582 residues: Nik-related protein kinase (1582 aa).

In terms of domain architecture, Protein kinase spans 25-313 (FSLDKTIGLG…SANMLQHPFV (289 aa)). Residues 31–39 (IGLGTYGRI) and Lys54 contribute to the ATP site. Residue Asp177 is the Proton acceptor of the active site. 3 stretches are compositionally biased toward low complexity: residues 492 to 507 (QVQS…QTQT), 527 to 538 (PEQQRQGQAPEQ), and 551 to 572 (EQNQ…AQAE). A disordered region spans residues 492–579 (QVQSQVSKKQ…QAETEAEEPE (88 aa)). Positions 725–759 (QRRQRRWEDIFNQHEEELRQVDKDKEDESSDNDEV) form a coiled coil. 2 disordered regions span residues 783–859 (EVQE…PPYS) and 926–1156 (ASAD…GSGM). 3 stretches are compositionally biased toward polar residues: residues 803–814 (FSSSVPQRSLLE), 825–834 (RSSQNRQNWL), and 850–859 (RRSQSSPPYS). A phosphoserine mark is found at Ser852 and Ser855. Over residues 926 to 944 (ASADTDGDDDDESNDTFED) the composition is skewed to acidic residues. 2 stretches are compositionally biased toward basic and acidic residues: residues 965–978 (VCKD…KFVD) and 999–1016 (GSCK…EEAY). Phosphoserine is present on residues Ser1027, Ser1031, and Ser1034. Basic and acidic residues-rich tracts occupy residues 1043-1061 (QEEH…EGDG) and 1125-1135 (PDHESDNKDIS). Residues 1136–1154 (ESSTQSDFSANHSSPSKGS) show a composition bias toward polar residues. The 344-residue stretch at 1209–1552 (TSEICCGSLW…RFLCTRGDKL (344 aa)) folds into the CNH domain.

The protein belongs to the protein kinase superfamily. STE Ser/Thr protein kinase family. STE20 subfamily.

The enzyme catalyses L-seryl-[protein] + ATP = O-phospho-L-seryl-[protein] + ADP + H(+). It catalyses the reaction L-threonyl-[protein] + ATP = O-phospho-L-threonyl-[protein] + ADP + H(+). May phosphorylate cofilin-1 and induce actin polymerization through this process, during the late stages of embryogenesis. Involved in the TNF-alpha-induced signaling pathway. This is Nik-related protein kinase (NRK) from Homo sapiens (Human).